The sequence spans 298 residues: HTH-type transcriptional regulator ArgP (298 aa).

An HTH lysR-type domain is found at 4–60 (LDYRWIEALDSVVSKGSFERAAEQLFISQSAVSQRIKQLEKYLAQPVLIREQPPRPT). The segment at residues 21-40 (FERAAEQLFISQSAVSQRIK) is a DNA-binding region (H-T-H motif).

It belongs to the LysR transcriptional regulatory family. Homodimer.

Functionally, controls the transcription of genes involved in arginine and lysine metabolism. This is HTH-type transcriptional regulator ArgP from Vibrio cholerae serotype O1 (strain ATCC 39315 / El Tor Inaba N16961).